The following is a 1134-amino-acid chain: DNA damage-binding protein 1 (1134 aa).

The protein belongs to the DDB1 family. As to quaternary structure, interacts with cdt-1 and cul-4. In terms of tissue distribution, expressed at high levels in the spermatheca of adult hermaphrodites.

The protein localises to the cytoplasm. It is found in the nucleus. It functions in the pathway protein modification; protein ubiquitination. Functionally, plays a role in DNA repair. May be a component of an E3 ubiquitin-protein ligase which promotes histone ubiquitination in response to UV irradiation. Histone ubiquitination may be important for subsequent DNA repair. Promotes the degradation of the replication licensing factor cdt-1 during S-phase, thereby preventing rereplication of DNA during a single round of cell division. The sequence is that of DNA damage-binding protein 1 (ddb-1) from Caenorhabditis elegans.